Consider the following 333-residue polypeptide: Glyceraldehyde-3-phosphate dehydrogenase (333 aa).

Residues 12–13 (RI), aspartate 36, arginine 80, and serine 120 each bind NAD(+). Residues 150–152 (SCT), threonine 181, arginine 196, 209–210 (TG), and arginine 232 contribute to the D-glyceraldehyde 3-phosphate site. Cysteine 151 (nucleophile) is an active-site residue. Asparagine 314 contacts NAD(+).

The protein belongs to the glyceraldehyde-3-phosphate dehydrogenase family. In terms of assembly, homotetramer.

The protein localises to the cytoplasm. It catalyses the reaction D-glyceraldehyde 3-phosphate + phosphate + NAD(+) = (2R)-3-phospho-glyceroyl phosphate + NADH + H(+). It functions in the pathway carbohydrate degradation; glycolysis; pyruvate from D-glyceraldehyde 3-phosphate: step 1/5. Functionally, catalyzes the oxidative phosphorylation of glyceraldehyde 3-phosphate (G3P) to 1,3-bisphosphoglycerate (BPG) using the cofactor NAD. The first reaction step involves the formation of a hemiacetal intermediate between G3P and a cysteine residue, and this hemiacetal intermediate is then oxidized to a thioester, with concomitant reduction of NAD to NADH. The reduced NADH is then exchanged with the second NAD, and the thioester is attacked by a nucleophilic inorganic phosphate to produce BPG. This is Glyceraldehyde-3-phosphate dehydrogenase (gapB) from Cereibacter sphaeroides (Rhodobacter sphaeroides).